The following is a 483-amino-acid chain: Glycogen synthase (483 aa).

Residue K15 participates in ADP-alpha-D-glucose binding.

This sequence belongs to the glycosyltransferase 1 family. Bacterial/plant glycogen synthase subfamily.

The enzyme catalyses [(1-&gt;4)-alpha-D-glucosyl](n) + ADP-alpha-D-glucose = [(1-&gt;4)-alpha-D-glucosyl](n+1) + ADP + H(+). It functions in the pathway glycan biosynthesis; glycogen biosynthesis. Synthesizes alpha-1,4-glucan chains using ADP-glucose. The polypeptide is Glycogen synthase (Alkalilimnicola ehrlichii (strain ATCC BAA-1101 / DSM 17681 / MLHE-1)).